Here is a 413-residue protein sequence, read N- to C-terminus: Glycylpeptide N-tetradecanoyltransferase (413 aa).

Tetradecanoyl-CoA contacts are provided by Phe34, Trp35, Phe163, Leu164, Cys165, Val166, Arg174, Leu175, and Ala176.

Belongs to the NMT family.

The protein resides in the cytoplasm. It carries out the reaction N-terminal glycyl-[protein] + tetradecanoyl-CoA = N-tetradecanoylglycyl-[protein] + CoA + H(+). Its function is as follows. Adds a myristoyl group to the N-terminal glycine residue of certain cellular proteins. The sequence is that of Glycylpeptide N-tetradecanoyltransferase (nmt) from Dictyostelium discoideum (Social amoeba).